Consider the following 140-residue polypeptide: Small ribosomal subunit protein uS19 (140 aa).

This sequence belongs to the universal ribosomal protein uS19 family.

In terms of biological role, protein S19 forms a complex with S13 that binds strongly to the 16S ribosomal RNA. The chain is Small ribosomal subunit protein uS19 from Methanocella arvoryzae (strain DSM 22066 / NBRC 105507 / MRE50).